Consider the following 699-residue polypeptide: tRNA(Met) cytidine acetyltransferase TmcA (699 aa).

Residues glutamine 179, 201–210, and arginine 323 contribute to the ATP site; that span reads GRGKSTLAGM. The region spanning 359–543 is the N-acetyltransferase domain; sequence IEIPLYEQRD…SGCYTAMALL (185 aa). Acetyl-CoA contacts are provided by residues 471 to 473, glutamate 511, and arginine 518; that span reads VAV.

It belongs to the RNA cytidine acetyltransferase family. TmcA subfamily.

The protein resides in the cytoplasm. It catalyses the reaction cytidine(34) in elongator tRNA(Met) + acetyl-CoA + ATP + H2O = N(4)-acetylcytidine(34) in elongator tRNA(Met) + ADP + phosphate + CoA + H(+). Functionally, catalyzes the formation of N(4)-acetylcytidine (ac(4)C) at the wobble position of tRNA(Met), by using acetyl-CoA as an acetyl donor and ATP (or GTP). The chain is tRNA(Met) cytidine acetyltransferase TmcA from Yersinia pestis (strain D106004).